Reading from the N-terminus, the 398-residue chain is Acetate kinase 1 (398 aa).

N10 lines the Mg(2+) pocket. K17 serves as a coordination point for ATP. A substrate-binding site is contributed by R89. D146 acts as the Proton donor/acceptor in catalysis. ATP contacts are provided by residues 206–210 (HLGNG), 281–283 (DCR), and 329–333 (GIGEN). E384 lines the Mg(2+) pocket.

It belongs to the acetokinase family. As to quaternary structure, homodimer. Mg(2+) serves as cofactor. It depends on Mn(2+) as a cofactor.

It localises to the cytoplasm. It catalyses the reaction acetate + ATP = acetyl phosphate + ADP. Its pathway is metabolic intermediate biosynthesis; acetyl-CoA biosynthesis; acetyl-CoA from acetate: step 1/2. Its function is as follows. Catalyzes the formation of acetyl phosphate from acetate and ATP. Can also catalyze the reverse reaction. This Neisseria meningitidis serogroup A / serotype 4A (strain DSM 15465 / Z2491) protein is Acetate kinase 1.